A 379-amino-acid polypeptide reads, in one-letter code: Chaperone protein DnaJ (379 aa).

A J domain is found at 5–70 (DYYEILGLDK…QKKAQYDQFG (66 aa)). The CR-type zinc finger occupies 135-217 (GVEKEISVTR…CRGKGIVRKH (83 aa)). 8 residues coordinate Zn(2+): C148, C151, C165, C168, C191, C194, C205, and C208. CXXCXGXG motif repeat units lie at residues 148-155 (CETCNGTG), 165-172 (CDKCNGTG), 191-198 (CDKCGGRG), and 205-212 (CEECRGKG).

Belongs to the DnaJ family. In terms of assembly, homodimer. It depends on Zn(2+) as a cofactor.

The protein resides in the cytoplasm. Its function is as follows. Participates actively in the response to hyperosmotic and heat shock by preventing the aggregation of stress-denatured proteins and by disaggregating proteins, also in an autonomous, DnaK-independent fashion. Unfolded proteins bind initially to DnaJ; upon interaction with the DnaJ-bound protein, DnaK hydrolyzes its bound ATP, resulting in the formation of a stable complex. GrpE releases ADP from DnaK; ATP binding to DnaK triggers the release of the substrate protein, thus completing the reaction cycle. Several rounds of ATP-dependent interactions between DnaJ, DnaK and GrpE are required for fully efficient folding. Also involved, together with DnaK and GrpE, in the DNA replication of plasmids through activation of initiation proteins. This Clostridium kluyveri (strain ATCC 8527 / DSM 555 / NBRC 12016 / NCIMB 10680 / K1) protein is Chaperone protein DnaJ.